The primary structure comprises 244 residues: L-xylulose reductase (244 aa).

M1 bears the N-acetylmethionine mark. 11-39 serves as a coordination point for NADP(+); the sequence is LVTGAGKGIGRSTVLALQAAGAHVVAVSR. R21 is modified (omega-N-methylarginine). S46 bears the Phosphoserine mark. Substrate is bound at residue S136. The Proton acceptor role is filled by Y149. The active site involves K153.

It belongs to the short-chain dehydrogenases/reductases (SDR) family. As to quaternary structure, homotetramer. Highly expressed in kidney and liver. Expressed in epididymis. Weakly expressed in brain, heart, lung, spleen and testis.

Its subcellular location is the membrane. It localises to the cytoplasmic vesicle. The protein resides in the secretory vesicle. It is found in the acrosome. The catalysed reaction is xylitol + NADP(+) = L-xylulose + NADPH + H(+). Its function is as follows. Catalyzes the NADPH-dependent reduction of several pentoses, tetroses, trioses, alpha-dicarbonyl compounds and L-xylulose. Participates in the uronate cycle of glucose metabolism. May play a role in the water absorption and cellular osmoregulation in the proximal renal tubules by producing xylitol, an osmolyte, thereby preventing osmolytic stress from occurring in the renal tubules. The polypeptide is L-xylulose reductase (DCXR) (Mesocricetus auratus (Golden hamster)).